The chain runs to 292 residues: 4-hydroxy-tetrahydrodipicolinate synthase (292 aa).

Threonine 45 provides a ligand contact to pyruvate. Residue tyrosine 133 is the Proton donor/acceptor of the active site. The active-site Schiff-base intermediate with substrate is the lysine 161. Isoleucine 203 serves as a coordination point for pyruvate.

The protein belongs to the DapA family. In terms of assembly, homotetramer; dimer of dimers.

It is found in the cytoplasm. It catalyses the reaction L-aspartate 4-semialdehyde + pyruvate = (2S,4S)-4-hydroxy-2,3,4,5-tetrahydrodipicolinate + H2O + H(+). The protein operates within amino-acid biosynthesis; L-lysine biosynthesis via DAP pathway; (S)-tetrahydrodipicolinate from L-aspartate: step 3/4. Its function is as follows. Catalyzes the condensation of (S)-aspartate-beta-semialdehyde [(S)-ASA] and pyruvate to 4-hydroxy-tetrahydrodipicolinate (HTPA). The sequence is that of 4-hydroxy-tetrahydrodipicolinate synthase from Vibrio vulnificus (strain YJ016).